A 617-amino-acid polypeptide reads, in one-letter code: Sodium-coupled monocarboxylate transporter 2 (617 aa).

Residues 1-5 (MEVKN) lie on the Extracellular side of the membrane. A helical membrane pass occupies residues 6–26 (FAVWDYVVFAALFIISSGIGV). The Cytoplasmic segment spans residues 27–47 (FYAIKERKKATSREFLVGGRQ). Residues 48 to 68 (MSFGPVALSLTASFMSAVTVL) traverse the membrane as a helical segment. At 69-80 (GTPADVYRFGAS) the chain is on the extracellular side. A helical transmembrane segment spans residues 81 to 101 (FVLFFITYGLVIILTSELFLP). At 102-128 (VFYRSGITSTYEYLQLRFNKPVRYAAT) the chain is on the cytoplasmic side. A helical membrane pass occupies residues 129-149 (VIYIVQTILYTGVVVYAPALA). The Extracellular portion of the chain corresponds to 150 to 157 (LNQVTGFD). Residues 158–178 (LWGSVFATGIVCTFYCTLGGL) form a helical membrane-spanning segment. The Cytoplasmic segment spans residues 179–180 (KA). A helical membrane pass occupies residues 181–201 (VVWTDAFQMVVMIVGFLTVLI). Residues 202 to 235 (QGSTYAGGLHNVLEQAENGSRLNIFDFDIDPLRR) lie on the Extracellular side of the membrane. The N-linked (GlcNAc...) asparagine glycan is linked to asparagine 219. The chain crosses the membrane as a helical span at residues 236-256 (HTFWTISVGGTFTWLGIYGVN). The Cytoplasmic portion of the chain corresponds to 257-273 (QSTIQRCISCKTEKHAK). The helical transmembrane segment at 274-294 (LALYFNLLGLWIILLCAVFSG) threads the bilayer. Residues 295 to 334 (LTMYAHFKDCDPWTSGIISAPDQLMPYFVMELFSTMPGLP) lie on the Extracellular side of the membrane. A helical transmembrane segment spans residues 335 to 357 (GLFVACAFSGTLSTVAASINALA). Residues 358 to 385 (TVTFEDFVKSCFPRLSDKLSTWISKGLC) are Cytoplasmic-facing. The helical transmembrane segment at 386–406 (LLFGVICTSTAVAASLMGGVI) threads the bilayer. The Extracellular portion of the chain corresponds to 407 to 411 (QAALS). Residues 412-432 (IHGMCGGPMLGLFSLGILFPF) traverse the membrane as a helical segment. Topologically, residues 433 to 437 (VNWKG) are cytoplasmic. A helical transmembrane segment spans residues 438 to 458 (ALAGLLTGILLSFWVAIGAFI). Topologically, residues 459–507 (YPAPASKTWPLPLSTDQCGLSNVTESVPPVLSSRPAIAETWYALSYLHY) are extracellular. Asparagine 480 carries an N-linked (GlcNAc...) asparagine glycan. Residues 508-528 (STVGCLGCIAAGVIISFLTGL) form a helical membrane-spanning segment. Over 529 to 617 (QKGKDIPPLL…NMALEKITHF (89 aa)) the chain is Cytoplasmic.

This sequence belongs to the sodium:solute symporter (SSF) (TC 2.A.21) family.

The protein localises to the apical cell membrane. It carries out the reaction (S)-lactate(out) + Na(+)(out) = (S)-lactate(in) + Na(+)(in). It catalyses the reaction nicotinate(out) + Na(+)(out) = nicotinate(in) + Na(+)(in). The enzyme catalyses pyruvate(out) + Na(+)(out) = pyruvate(in) + Na(+)(in). The catalysed reaction is propanoate(out) + Na(+)(out) = propanoate(in) + Na(+)(in). It carries out the reaction butanoate(out) + Na(+)(out) = butanoate(in) + Na(+)(in). It catalyses the reaction acetoacetate(out) + Na(+)(out) = acetoacetate(in) + Na(+)(in). Functionally, acts as an electroneutral and low-affinity sodium (Na(+))-dependent sodium-coupled solute transporter. Catalyzes the transport across the plasma membrane of many monocarboxylates such as lactate, pyruvate, nicotinate, propionate, butyrate and beta-D-hydroxybutyrate. May be responsible for the first step of reabsorption of monocarboxylates from the lumen of the proximal tubule of the kidney and the small intestine. May play also a role in monocarboxylates transport in the retina. Mediates electroneutral uptake of lactate, with a stoichiometry of 2 Na(+) for each lactate. The protein is Sodium-coupled monocarboxylate transporter 2 (SLC5A12) of Bos taurus (Bovine).